The primary structure comprises 460 residues: tRNA modification GTPase MnmE (460 aa).

3 residues coordinate (6S)-5-formyl-5,6,7,8-tetrahydrofolate: Arg-24, Glu-81, and Lys-121. The region spanning 218 to 384 is the TrmE-type G domain; the sequence is GLVVAIAGPP…MVEALAGFAA (167 aa). GTP-binding positions include 228-233, 247-253, and 272-275; these read NVGKST, SPHAGTT, and DTAG. The Mg(2+) site is built by Ser-232 and Thr-253. Lys-460 provides a ligand contact to (6S)-5-formyl-5,6,7,8-tetrahydrofolate.

It belongs to the TRAFAC class TrmE-Era-EngA-EngB-Septin-like GTPase superfamily. TrmE GTPase family. As to quaternary structure, homodimer. Heterotetramer of two MnmE and two MnmG subunits. It depends on K(+) as a cofactor.

The protein resides in the cytoplasm. Exhibits a very high intrinsic GTPase hydrolysis rate. Involved in the addition of a carboxymethylaminomethyl (cmnm) group at the wobble position (U34) of certain tRNAs, forming tRNA-cmnm(5)s(2)U34. The sequence is that of tRNA modification GTPase MnmE from Rhodopseudomonas palustris (strain HaA2).